The chain runs to 279 residues: Urease accessory protein UreD (279 aa).

The protein belongs to the UreD family. In terms of assembly, ureD, UreF and UreG form a complex that acts as a GTP-hydrolysis-dependent molecular chaperone, activating the urease apoprotein by helping to assemble the nickel containing metallocenter of UreC. The UreE protein probably delivers the nickel.

The protein localises to the cytoplasm. Its function is as follows. Required for maturation of urease via the functional incorporation of the urease nickel metallocenter. In Brucella suis (strain ATCC 23445 / NCTC 10510), this protein is Urease accessory protein UreD.